The primary structure comprises 104 residues: MAVSLLLRGGRIRALKAVLLEARVFPGELVSVVRLSTESEKSAKEKELHPKTQSVLKEPEPTDTTTYKNLQHHDYNTYTFLDLNLDLSKFRLPQPSSGRESPRH.

The N-terminal 35 residues, 1 to 35 (MAVSLLLRGGRIRALKAVLLEARVFPGELVSVVRL), are a transit peptide targeting the mitochondrion. The segment covering 38–50 (ESEKSAKEKELHP) has biased composition (basic and acidic residues). The disordered stretch occupies residues 38–68 (ESEKSAKEKELHPKTQSVLKEPEPTDTTTYK). Ser101 bears the Phosphoserine mark.

The protein belongs to the complex I NDUFV3 subunit family. Complex I is composed of 45 different subunits. This is a component of the flavoprotein-sulfur (FP) fragment of the enzyme.

It localises to the mitochondrion inner membrane. In terms of biological role, accessory subunit of the mitochondrial membrane respiratory chain NADH dehydrogenase (Complex I), that is believed not to be involved in catalysis. Complex I functions in the transfer of electrons from NADH to the respiratory chain. The immediate electron acceptor for the enzyme is believed to be ubiquinone. May be the terminally assembled subunit of Complex I. This chain is NADH dehydrogenase [ubiquinone] flavoprotein 3, mitochondrial (Ndufv3), found in Mus musculus (Mouse).